The primary structure comprises 284 residues: MYVVSTKQMLNNAQRGGYAVPAFNIHNLETMQVVVETAANLHAPVIIAGTPGTFTHAGTENLLALVSAMAKQYHHPLAIHLDHHTKFDDIAQKVRSGVRSVMIDASHLPFAQNISRVKEVVDFCHRFDVSVEAELGQLGGQEDDVQVNEVDALYTNPAQAREFAEATGIDSLAVTIGTAHGMYASAPVLDFSRLENIRQWVNLPLVLHGASGLSTKDIQQTIKLGICKINVATELKNAFSQSLKNYLTEHPEATDPRDYLQSAKSAMRDVVSKVIADCGCEGRA.

D82 (proton donor) is an active-site residue. Residues H83 and H180 each coordinate Zn(2+). Residue G181 coordinates dihydroxyacetone phosphate. Position 208 (H208) interacts with Zn(2+). Dihydroxyacetone phosphate-binding positions include 209-211 and 230-233; these read GAS and NVAT.

This sequence belongs to the class II fructose-bisphosphate aldolase family. TagBP aldolase GatY subfamily. Forms a complex with GatZ. It depends on Zn(2+) as a cofactor.

The enzyme catalyses D-tagatofuranose 1,6-bisphosphate = D-glyceraldehyde 3-phosphate + dihydroxyacetone phosphate. Its pathway is carbohydrate metabolism; D-tagatose 6-phosphate degradation; D-glyceraldehyde 3-phosphate and glycerone phosphate from D-tagatose 6-phosphate: step 2/2. Functionally, catalytic subunit of the tagatose-1,6-bisphosphate aldolase GatYZ, which catalyzes the reversible aldol condensation of dihydroxyacetone phosphate (DHAP or glycerone-phosphate) with glyceraldehyde 3-phosphate (G3P) to produce tagatose 1,6-bisphosphate (TBP). Requires GatZ subunit for full activity and stability. Is involved in the catabolism of galactitol. The chain is D-tagatose-1,6-bisphosphate aldolase subunit GatY from Shigella flexneri serotype 5b (strain 8401).